The chain runs to 596 residues: DNA mismatch repair protein MutL (596 aa).

This sequence belongs to the DNA mismatch repair MutL/HexB family.

Its function is as follows. This protein is involved in the repair of mismatches in DNA. It is required for dam-dependent methyl-directed DNA mismatch repair. May act as a 'molecular matchmaker', a protein that promotes the formation of a stable complex between two or more DNA-binding proteins in an ATP-dependent manner without itself being part of a final effector complex. This Leptospira borgpetersenii serovar Hardjo-bovis (strain L550) protein is DNA mismatch repair protein MutL.